Here is a 56-residue protein sequence, read N- to C-terminus: Conotoxin reg3.9 (56 aa).

A signal peptide spans 1-8 (LLFPLSAL). The disordered stretch occupies residues 1–22 (LLFPLSALPLDGDQPADQPAER). A propeptide spanning residues 9-40 (PLDGDQPADQPAERMQDISPEQNFWFDLVERG) is cleaved from the precursor. Disulfide bonds link Cys41/Cys55, Cys42/Cys53, and Cys47/Cys56.

Belongs to the conotoxin M superfamily. As to expression, expressed by the venom duct.

It is found in the secreted. This Conus regius (Crown cone) protein is Conotoxin reg3.9.